Consider the following 525-residue polypeptide: DNA damage-binding protein CMR1 (525 aa).

Disordered regions lie at residues A38–E86 and G212–D233. Over residues T53–V62 the composition is skewed to basic residues. WD repeat units lie at residues I183–E224, P241–A281, S288–P328, L339–P379, E384–K425, G448–L491, and D494–M525. The span at N223 to P232 shows a compositional bias: acidic residues.

The protein belongs to the WD repeat DDB2/WDR76 family.

In terms of biological role, DNA-binding protein that binds to both single- and double-stranded DNA. Binds preferentially to UV-damaged DNA. May be involved in DNA-metabolic processes. The protein is DNA damage-binding protein CMR1 of Coccidioides immitis (strain RS) (Valley fever fungus).